A 372-amino-acid chain; its full sequence is Alpha-parvin (372 aa).

Residues 1–11 are compositionally biased toward low complexity; that stretch reads MATSPQKSPSV. The interval 1–45 is disordered; sequence MATSPQKSPSVPKSPTPKSPPSRKKDDSFLGKLGGTLARRKKAKE. Alanine 2 is modified (N-acetylalanine). Serine 8, serine 14, and serine 19 each carry phosphoserine. Residues 21-25 form an interaction with ARHGAP31 region; it reads PSRKK. Phosphoserine is present on residues serine 28 and serine 62. Calponin-homology (CH) domains are found at residues 95-202 and 262-369; these read QELM…QYFR and NVVK…TKYR. The tract at residues 223–372 is required for interaction with TESK1 and ILK; that stretch reads GILQSRQIQE…NLFTKYRNVE (150 aa).

This sequence belongs to the parvin family. In terms of assembly, component of the heterotrimeric IPP (ILK-PINCH-PARVIN) complex composed of ILK, LIMS1/PINCH and PARVA; the complex binds to F-actin via the C-terminal tail of LIMS1 and the N-terminal region of PARVA, promoting F-actin filament bundling. Formation of the IPP complex is dependent on protein kinase C and precedes integrin-mediated cell adhesion and spreading. Interacts with TGFB1I1. Interacts with ARHGAP31. Interacts with the actin cytoskeleton. Interacts (via C-terminus) with TESK1 (via C-terminus); the interaction inhibits TESK1 kinase activity. Interacts with PXN/PAXILLIN (via LD motif 4). As to expression, widely expressed, with highest levels in heart, skeletal muscle, kidney and liver.

It localises to the cell junction. The protein resides in the focal adhesion. It is found in the cell membrane. Its subcellular location is the cytoplasm. The protein localises to the cytoskeleton. It localises to the myofibril. The protein resides in the sarcomere. It is found in the z line. Its function is as follows. Plays a role in sarcomere organization and in smooth muscle cell contraction. Required for normal development of the embryonic cardiovascular system, and for normal septation of the heart outflow tract. Plays a role in sprouting angiogenesis and is required for normal adhesion of vascular smooth muscle cells to endothelial cells during blood vessel development. Plays a role in the reorganization of the actin cytoskeleton, formation of lamellipodia and ciliogenesis. Plays a role in the establishment of cell polarity, cell adhesion, cell spreading, and directed cell migration. Within the IPP (ILK-PINCH-PARVIN) complex, binds to F-actin, promoting F-actin bundling, a process required to generate force for actin cytoskeleton reorganization and subsequent dynamic cell adhesion events such as cell spreading and migration. The sequence is that of Alpha-parvin (PARVA) from Homo sapiens (Human).